Consider the following 442-residue polypeptide: Protein PRRC1-A (442 aa).

Residues Met-1–Ala-27 form a disordered region.

The protein belongs to the PRRC1 family.

The protein resides in the golgi apparatus. This is Protein PRRC1-A (prrc1-a) from Xenopus laevis (African clawed frog).